Consider the following 342-residue polypeptide: (Lyso)-N-acylphosphatidylethanolamine lipase (342 aa).

The AB hydrolase-1 domain maps to 70–323 (PLVMVHGFGG…EIEGASHHVY (254 aa)).

This sequence belongs to the peptidase S33 family. ABHD4/ABHD5 subfamily. As to expression, highest levels in the CNS and in testis, intermediate levels in liver and kidney. Hardly detectable in heart.

It carries out the reaction N-hexadecanoyl-1,2-di-(9Z-octadecenoyl)-sn-glycero-3-phosphoethanolamine + H2O = N-hexadecanoyl-1-(9Z-octadecenoyl)-sn-glycero-3-phosphoethanolamine + (9Z)-octadecenoate + H(+). It catalyses the reaction an N-acyl-1,2-diacyl-sn-glycero-3-phosphoethanolamine + H2O = N,1-diacyl-sn-glycero-3-phosphoethanolamine + a fatty acid + H(+). The enzyme catalyses N-hexadecanoyl-1-(9Z-octadecenoyl)-sn-glycero-3-phosphoethanolamine + H2O = N-hexadecanoyl-sn-glycero-3-phosphoethanolamine + (9Z)-octadecenoate + H(+). The catalysed reaction is N-octadecanoyl-1-(9Z-octadecenoyl)-sn-glycero-3-phosphoethanolamine + H2O = N-octadecanoyl-sn-glycero-3-phospho-ethanolamine + (9Z)-octadecenoate + H(+). It carries out the reaction N-eicosanoyl-1-(9Z-octadecenoyl)-sn-glycero-3-phosphoethanolamine + H2O = N-eicosanoyl-sn-glycero-3-phosphoethanolamine + (9Z)-octadecenoate + H(+). It catalyses the reaction N,1-di-(9Z-octadecenoyl)-sn-glycero-3-phosphoethanolamine + H2O = N-(9Z-octadecenoyl)-sn-glycero-3-phosphoethanolamine + (9Z)-octadecenoate + H(+). The enzyme catalyses N-(5Z,8Z,11Z,14Z-eicosatetraenoyl)-1-(9Z-octadecenoyl)-sn-glycero-3-phosphoethanolamine + H2O = N-(5Z,8Z,11Z,14Z-eicosatetraenoyl)-sn-glycero-3-phosphoethanolamine + (9Z)-octadecenoate + H(+). The catalysed reaction is 1-octadecanoyl-2-(9Z-octadecenoyl)-sn-glycero-3-phospho-(N-hexadecanoyl)-serine + H2O = 1-octadecanoyl-2-hydroxy-sn-glycero-3-phospho-(N-hexadecanoyl)-serine + (9Z)-octadecenoate + H(+). It carries out the reaction 1-O-(1Z-octadecenoyl)-2-(9Z-octadecenoyl)-sn-glycero-3-phospho-N-hexadecanoyl-ethanolamine + H2O = 1-O-(1Z-octadecenyl)-sn-glycero-3-phospho-N-hexadecanoyl-ethanolamine + (9Z)-octadecenoate + H(+). It catalyses the reaction N,1-diacyl-sn-glycero-3-phosphoethanolamine + H2O = N-acyl-sn-glycero-3-phosphoethanolamine + a fatty acid + H(+). Functionally, lysophospholipase selective for N-acyl phosphatidylethanolamine (NAPE). Contributes to the biosynthesis of N-acyl ethanolamines, including the endocannabinoid anandamide by hydrolyzing the sn-1 and sn-2 acyl chains from N-acyl phosphatidylethanolamine (NAPE) generating glycerophospho-N-acyl ethanolamine (GP-NAE), an intermediate for N-acyl ethanolamine biosynthesis. Hydrolyzes substrates bearing saturated, monounsaturated, polyunsaturated N-acyl chains. Shows no significant activity towards other lysophospholipids, including lysophosphatidylcholine, lysophosphatidylethanolamine and lysophosphatidylserine. This is (Lyso)-N-acylphosphatidylethanolamine lipase from Mus musculus (Mouse).